The primary structure comprises 193 residues: uncharacterized protein (193 aa).

Residues 86 to 181 are a coiled coil; the sequence is TKQRELLEIL…QVEEVQAEVG (96 aa).

This is an uncharacterized protein from Streptococcus pyogenes serotype M6 (strain ATCC BAA-946 / MGAS10394).